A 525-amino-acid polypeptide reads, in one-letter code: Beta-1,4-xylosyltransferase IRX14 (525 aa).

The Cytoplasmic segment spans residues 1–35; sequence MKLSALHQSYLNRRSNSFRSPTSLDSSVDGSGKSL. Residues 36 to 56 traverse the membrane as a helical; Signal-anchor for type II membrane protein segment; that stretch reads IAVFWLILHCLCCLISLVLGF. The Lumenal segment spans residues 57–525; it reads RFSRLVFFFL…SSSSKHQERN (469 aa). N-linked (GlcNAc...) asparagine glycans are attached at residues N102, N204, and N326. The segment at 452–525 is disordered; it reads RTPWPDVPPE…SSSSKHQERN (74 aa). A compositionally biased stretch (polar residues) spans 471-488; it reads PLSQGNTVVVIPKQQQHP. The segment covering 489-503 has biased composition (basic residues); the sequence is TKIRKPKRKSKKSKH. The span at 508–519 shows a compositional bias: polar residues; sequence TDTTTQVYSSSS.

Belongs to the glycosyltransferase 43 family. In terms of tissue distribution, expressed in developing interfascicular fibers and xylem cells in stems and developing secondary xylem in roots.

The protein resides in the golgi apparatus membrane. It carries out the reaction [(1-&gt;4)-beta-D-xylan](n) + UDP-alpha-D-xylose = [(1-&gt;4)-beta-D-xylan](n+1) + UDP + H(+). Involved in the synthesis of the hemicellulose glucuronoxylan, a major component of secondary cell walls. Involved in the elongation of glucuronoxylan xylosyl backbone. Xylan xylosyltransferase that acts cooperatively with IRX9 to achieve the successive addition of xylosyl residues during xylan backbone elongation. Required for the proper composition and structural properties of released seed coat mucilage. Required for the production of highly branched xylan polymers in seed coat mucilage. Xylan with xylose side chains seems to be necessary for pectin attachment to the seed surface. Together with MUCI70, required for xylan and pectin synthesis in seed coat epidermal (SCE) cells. This chain is Beta-1,4-xylosyltransferase IRX14, found in Arabidopsis thaliana (Mouse-ear cress).